A 209-amino-acid polypeptide reads, in one-letter code: Thiamine-phosphate synthase (209 aa).

Residues 36–40 (QYRDK) and Asn-68 each bind 4-amino-2-methyl-5-(diphosphooxymethyl)pyrimidine. 2 residues coordinate Mg(2+): Asp-69 and Asp-87. Thr-106 is a 4-amino-2-methyl-5-(diphosphooxymethyl)pyrimidine binding site. Position 133 to 135 (133 to 135 (SST)) interacts with 2-[(2R,5Z)-2-carboxy-4-methylthiazol-5(2H)-ylidene]ethyl phosphate. Lys-136 is a 4-amino-2-methyl-5-(diphosphooxymethyl)pyrimidine binding site. Gly-163 is a binding site for 2-[(2R,5Z)-2-carboxy-4-methylthiazol-5(2H)-ylidene]ethyl phosphate.

Belongs to the thiamine-phosphate synthase family. The cofactor is Mg(2+).

It catalyses the reaction 2-[(2R,5Z)-2-carboxy-4-methylthiazol-5(2H)-ylidene]ethyl phosphate + 4-amino-2-methyl-5-(diphosphooxymethyl)pyrimidine + 2 H(+) = thiamine phosphate + CO2 + diphosphate. It carries out the reaction 2-(2-carboxy-4-methylthiazol-5-yl)ethyl phosphate + 4-amino-2-methyl-5-(diphosphooxymethyl)pyrimidine + 2 H(+) = thiamine phosphate + CO2 + diphosphate. The catalysed reaction is 4-methyl-5-(2-phosphooxyethyl)-thiazole + 4-amino-2-methyl-5-(diphosphooxymethyl)pyrimidine + H(+) = thiamine phosphate + diphosphate. It functions in the pathway cofactor biosynthesis; thiamine diphosphate biosynthesis; thiamine phosphate from 4-amino-2-methyl-5-diphosphomethylpyrimidine and 4-methyl-5-(2-phosphoethyl)-thiazole: step 1/1. In terms of biological role, condenses 4-methyl-5-(beta-hydroxyethyl)thiazole monophosphate (THZ-P) and 2-methyl-4-amino-5-hydroxymethyl pyrimidine pyrophosphate (HMP-PP) to form thiamine monophosphate (TMP). The polypeptide is Thiamine-phosphate synthase (Pseudomonas paraeruginosa (strain DSM 24068 / PA7) (Pseudomonas aeruginosa (strain PA7))).